Consider the following 459-residue polypeptide: Taurine--pyruvate aminotransferase (459 aa).

The residue at position 287 (lysine 287) is an N6-(pyridoxal phosphate)lysine.

It belongs to the class-III pyridoxal-phosphate-dependent aminotransferase family. Requires pyridoxal 5'-phosphate as cofactor.

It is found in the cytoplasm. It catalyses the reaction taurine + pyruvate = sulfoacetaldehyde + L-alanine. The protein operates within organosulfur degradation; taurine degradation via aerobic pathway; acetyl phosphate and sulfite from taurine: step 1/2. Catalyzes the degradation of taurine into alanine and sulfoacetaldehyde. This chain is Taurine--pyruvate aminotransferase, found in Rhodobacter capsulatus (strain ATCC BAA-309 / NBRC 16581 / SB1003).